A 276-amino-acid polypeptide reads, in one-letter code: Shikimate dehydrogenase (NADP(+)) (276 aa).

Shikimate-binding positions include 15–17 (SLS) and Thr-62. Catalysis depends on Lys-66, which acts as the Proton acceptor. Glu-78 is an NADP(+) binding site. Shikimate contacts are provided by Asn-87 and Asp-102. Residues 151-156 (NRTVEK) and Ile-218 contribute to the NADP(+) site. Residue Tyr-220 participates in shikimate binding. Gly-241 contributes to the NADP(+) binding site.

Belongs to the shikimate dehydrogenase family. Homodimer.

The enzyme catalyses shikimate + NADP(+) = 3-dehydroshikimate + NADPH + H(+). It functions in the pathway metabolic intermediate biosynthesis; chorismate biosynthesis; chorismate from D-erythrose 4-phosphate and phosphoenolpyruvate: step 4/7. Functionally, involved in the biosynthesis of the chorismate, which leads to the biosynthesis of aromatic amino acids. Catalyzes the reversible NADPH linked reduction of 3-dehydroshikimate (DHSA) to yield shikimate (SA). The protein is Shikimate dehydrogenase (NADP(+)) of Geobacillus kaustophilus (strain HTA426).